We begin with the raw amino-acid sequence, 367 residues long: Molybdenum import ATP-binding protein ModC (367 aa).

Positions 1–234 constitute an ABC transporter domain; that stretch reads MSSAALEVRL…PALSGGFGHE (234 aa). 33–40 contributes to the ATP binding site; sequence GPSGAGKS. One can recognise a Mop domain in the interval 293–366; sequence HISLHNILPV…IKSVAVDVLG (74 aa).

The protein belongs to the ABC transporter superfamily. Molybdate importer (TC 3.A.1.8) family. The complex is composed of two ATP-binding proteins (ModC), two transmembrane proteins (ModB) and a solute-binding protein (ModA).

It localises to the cell inner membrane. It catalyses the reaction molybdate(out) + ATP + H2O = molybdate(in) + ADP + phosphate + H(+). In terms of biological role, part of the ABC transporter complex ModABC involved in molybdenum import. Responsible for energy coupling to the transport system. The sequence is that of Molybdenum import ATP-binding protein ModC from Granulibacter bethesdensis (strain ATCC BAA-1260 / CGDNIH1).